Reading from the N-terminus, the 190-residue chain is Ribosome hibernation promotion factor (190 aa).

Belongs to the HPF/YfiA ribosome-associated protein family. Long HPF subfamily. In terms of assembly, interacts with 100S ribosomes.

The protein localises to the cytoplasm. Functionally, required for dimerization of active 70S ribosomes into 100S ribosomes in stationary phase; 100S ribosomes are translationally inactive and sometimes present during exponential growth. The chain is Ribosome hibernation promotion factor from Staphylococcus aureus (strain COL).